The following is a 230-amino-acid chain: Extracellular ribonuclease LE (230 aa).

An N-terminal signal peptide occupies residues 1-25; that stretch reads MASNSAFSLFLILLIITQCLSVLNA. Residue Gln-37 participates in RNA binding. Cystine bridges form between Cys-43-Cys-49, Cys-50-Cys-106, Cys-79-Cys-125, Cys-186-Cys-221, and Cys-202-Cys-213. Residues His-64, Phe-114, 117–118, and 121–122 each bind RNA; these read HE and KH. The active-site Proton donor is His-64. The active site involves Glu-118. His-122 serves as the catalytic Proton acceptor.

Belongs to the RNase T2 family.

It is found in the secreted. The protein localises to the extracellular space. Its subcellular location is the cell wall. It catalyses the reaction a ribonucleotidyl-ribonucleotide-RNA + H2O = a 3'-end 3'-phospho-ribonucleotide-RNA + a 5'-end dephospho-ribonucleoside-RNA + H(+). Its function is as follows. Probably involved in plant phosphate-starvation rescue system. The protein is Extracellular ribonuclease LE of Solanum lycopersicum (Tomato).